The sequence spans 146 residues: Anti-sigma F factor (146 aa).

Belongs to the anti-sigma-factor family.

It carries out the reaction L-seryl-[protein] + ATP = O-phospho-L-seryl-[protein] + ADP + H(+). It catalyses the reaction L-threonyl-[protein] + ATP = O-phospho-L-threonyl-[protein] + ADP + H(+). Functionally, binds to sigma F and blocks its ability to form an RNA polymerase holoenzyme (E-sigma F). Phosphorylates SpoIIAA on a serine residue. This phosphorylation may enable SpoIIAA to act as an anti-anti-sigma factor that counteracts SpoIIAB and thus releases sigma F from inhibition. The chain is Anti-sigma F factor from Halalkalibacterium halodurans (strain ATCC BAA-125 / DSM 18197 / FERM 7344 / JCM 9153 / C-125) (Bacillus halodurans).